A 183-amino-acid polypeptide reads, in one-letter code: ATP synthase subunit b, chloroplastic (183 aa).

Residues Leu27 to Leu49 form a helical membrane-spanning segment.

The protein belongs to the ATPase B chain family. F-type ATPases have 2 components, F(1) - the catalytic core - and F(0) - the membrane proton channel. F(1) has five subunits: alpha(3), beta(3), gamma(1), delta(1), epsilon(1). F(0) has four main subunits: a(1), b(1), b'(1) and c(10-14). The alpha and beta chains form an alternating ring which encloses part of the gamma chain. F(1) is attached to F(0) by a central stalk formed by the gamma and epsilon chains, while a peripheral stalk is formed by the delta, b and b' chains.

The protein resides in the plastid. It is found in the chloroplast thylakoid membrane. In terms of biological role, f(1)F(0) ATP synthase produces ATP from ADP in the presence of a proton or sodium gradient. F-type ATPases consist of two structural domains, F(1) containing the extramembraneous catalytic core and F(0) containing the membrane proton channel, linked together by a central stalk and a peripheral stalk. During catalysis, ATP synthesis in the catalytic domain of F(1) is coupled via a rotary mechanism of the central stalk subunits to proton translocation. Component of the F(0) channel, it forms part of the peripheral stalk, linking F(1) to F(0). This is ATP synthase subunit b, chloroplastic from Ranunculus macranthus (Large buttercup).